A 137-amino-acid polypeptide reads, in one-letter code: Large ribosomal subunit protein uL16 (137 aa).

This sequence belongs to the universal ribosomal protein uL16 family. As to quaternary structure, part of the 50S ribosomal subunit.

Its function is as follows. Binds 23S rRNA and is also seen to make contacts with the A and possibly P site tRNAs. In Rhizobium etli (strain CIAT 652), this protein is Large ribosomal subunit protein uL16.